Here is a 198-residue protein sequence, read N- to C-terminus: FMN-dependent NADH:quinone oxidoreductase 6 (198 aa).

96–99 (MYNF) is an FMN binding site.

This sequence belongs to the azoreductase type 1 family. In terms of assembly, homodimer. It depends on FMN as a cofactor.

It carries out the reaction 2 a quinone + NADH + H(+) = 2 a 1,4-benzosemiquinone + NAD(+). The enzyme catalyses N,N-dimethyl-1,4-phenylenediamine + anthranilate + 2 NAD(+) = 2-(4-dimethylaminophenyl)diazenylbenzoate + 2 NADH + 2 H(+). Quinone reductase that provides resistance to thiol-specific stress caused by electrophilic quinones. Its function is as follows. Also exhibits azoreductase activity. Catalyzes the reductive cleavage of the azo bond in aromatic azo compounds to the corresponding amines. In Burkholderia lata (strain ATCC 17760 / DSM 23089 / LMG 22485 / NCIMB 9086 / R18194 / 383), this protein is FMN-dependent NADH:quinone oxidoreductase 6.